A 239-amino-acid chain; its full sequence is Ribose-5-phosphate isomerase A (239 aa).

Substrate-binding positions include 31-34 (FGST), 88-91 (DGAD), and 101-104 (KGGG). Catalysis depends on Glu110, which acts as the Proton acceptor. Lys128 provides a ligand contact to substrate.

Belongs to the ribose 5-phosphate isomerase family. As to quaternary structure, homodimer.

The enzyme catalyses aldehydo-D-ribose 5-phosphate = D-ribulose 5-phosphate. The protein operates within carbohydrate degradation; pentose phosphate pathway; D-ribose 5-phosphate from D-ribulose 5-phosphate (non-oxidative stage): step 1/1. In terms of biological role, catalyzes the reversible conversion of ribose-5-phosphate to ribulose 5-phosphate. This is Ribose-5-phosphate isomerase A from Chloroflexus aurantiacus (strain ATCC 29366 / DSM 635 / J-10-fl).